Consider the following 883-residue polypeptide: Glutamate receptor 2 (883 aa).

The first 21 residues, 1 to 21 (MQKIMHISVLLSPVLWGLIFG), serve as a signal peptide directing secretion. Residues 22–543 (VSSNSIQIGG…GVFSFLDPLA (522 aa)) are Extracellular-facing. A disulfide bond links cysteine 78 and cysteine 330. N-linked (GlcNAc...) asparagine glycans are attached at residues asparagine 256, asparagine 370, asparagine 406, and asparagine 413. The L-glutamate site is built by proline 499, threonine 501, and arginine 506. A helical transmembrane segment spans residues 544–564 (YEIWMCIVFAYIGVSVVLFLV). Over 565 to 591 (SRFSPYEWHTEEFEDGRETQSSESTNE) the chain is Cytoplasmic. An intramembrane region (helical; Pore-forming) is located at residues 592–607 (FGIFNSLWFSLGAFMQ). An intramembrane segment occupies 608-610 (QGC). Cysteine 610 carries S-palmitoyl cysteine lipidation. The Cytoplasmic segment spans residues 611–616 (DISPRS). The chain crosses the membrane as a helical span at residues 617–637 (LSGRIVGGVWWFFTLIIISSY). At 638–812 (TANLAAFLTV…EKTSALSLSN (175 aa)) the chain is on the extracellular side. L-glutamate contacts are provided by serine 675 and threonine 676. Phosphoserine; by PKC is present on serine 683. At serine 717 the chain carries Phosphoserine; by PKG. Glutamate 726 is an L-glutamate binding site. Residues cysteine 739 and cysteine 794 are joined by a disulfide bond. Residues 813 to 833 (VAGVFYILVGGLGLAMLVALI) form a helical membrane-spanning segment. The Cytoplasmic segment spans residues 834-883 (EFCYKSRAEAKRMKVAKNPQNINPSSSQNSQNFATYKEGYNVYGIESVKI). A lipid anchor (S-palmitoyl cysteine) is attached at cysteine 836. Serine 860 and serine 863 each carry phosphoserine. A required for interaction with IQSEC1 region spans residues 867–877 (ATYKEGYNVYG). Phosphotyrosine is present on tyrosine 876. Serine 880 is subject to Phosphoserine.

Belongs to the glutamate-gated ion channel (TC 1.A.10.1) family. GRIA2 subfamily. In terms of assembly, homotetramer or heterotetramer of pore-forming glutamate receptor subunits. Tetramers may be formed by the dimerization of dimers. May interact with MPP4. Forms a ternary complex with GRIP1 and CSPG4. Interacts with ATAD1 in an ATP-dependent manner. ATAD1-catalyzed ATP hydrolysis disrupts binding to ATAD1 and to GRIP1 and leads to AMPAR complex disassembly. Interacts with GRIP2. Interacts with GRIP1. Interacts with NSF via its C-terminus. Interacts with CACNG2, PICK1 and GRIP2. Interacts with GRIA1 and SYNDIG1. Part of a complex containing GRIA2, NSF and NAPA and/or NAPB. Interacts with SNX27 (via PDZ domain); the interaction is required for recycling to the plasma membrane when endocytosed and prevent degradation in lysosomes. Interacts with LRFN1. Found in a complex with GRIA1, GRIA3, GRIA4, CNIH2, CNIH3, CACNG2, CACNG3, CACNG4, CACNG5, CACNG7 and CACNG8. Interacts with CACNG5. Interacts with OLFM2. Interacts with AP4B1, AP4E1 and AP4M1; probably indirect it mediates the somatodendritic localization of GRIA2 in neurons. Forms a complex with GRIP1, NSG1 and STX12; controls the intracellular fate of AMPAR and the endosomal sorting of the GRIA2 subunit toward recycling and membrane targeting. Interacts with IQSEC1; the interaction is required for ARF6 activation. Interacts (heterotetramer form) with CNIH2 and CNIH3; this interaction promotes expression at the plasma membrane and extensively modulates their gating properties by slowing deactivation and desensitization kinetics. In terms of processing, palmitoylated. Depalmitoylated upon L-glutamate stimulation. Cys-610 palmitoylation leads to Golgi retention and decreased cell surface expression. In contrast, Cys-836 palmitoylation does not affect cell surface expression but regulates stimulation-dependent endocytosis. Phosphorylation at Tyr-876 is required for interaction with IQSEC1 and ARF6 activation, which in turn triggers AMPAR internalization for persistent synaptic depression. Post-translationally, ubiquitinated by RNF167, leading to its degradation. In terms of processing, N-glycosylated. In terms of tissue distribution, detected in forebrain. Detected in dendrites of neuronal cells. Expressed in the pyramidal cell layers of CA1 and CA3 and in the granule cell layer of the dentate gyrus.

The protein resides in the cell membrane. The protein localises to the postsynaptic cell membrane. It localises to the postsynaptic density membrane. It catalyses the reaction Ca(2+)(in) = Ca(2+)(out). It carries out the reaction Na(+)(in) = Na(+)(out). Ionotropic glutamate receptor that functions as a ligand-gated cation channel, gated by L-glutamate and glutamatergic agonists such as alpha-amino-3-hydroxy-5-methyl-4-isoxazolepropionic acid (AMPA), quisqualic acid, and kainic acid. L-glutamate acts as an excitatory neurotransmitter at many synapses in the central nervous system and plays an important role in fast excitatory synaptic transmission. Binding of the excitatory neurotransmitter L-glutamate induces a conformation change, leading to the opening of the cation channel, and thereby converts the chemical signal to an electrical impulse upon entry of monovalent and divalent cations such as sodium and calcium. The receptor then desensitizes rapidly and enters in a transient inactive state, characterized by the presence of bound agonist. In the presence of CACNG4 or CACNG7 or CACNG8, shows resensitization which is characterized by a delayed accumulation of current flux upon continued application of L-glutamate. Through complex formation with NSG1, GRIP1 and STX12 controls the intracellular fate of AMPAR and the endosomal sorting of the GRIA2 subunit toward recycling and membrane targeting. This Rattus norvegicus (Rat) protein is Glutamate receptor 2.